The chain runs to 388 residues: Cytochrome b (388 aa).

4 helical membrane-spanning segments follow: residues 32-52, 76-98, 113-133, and 179-199; these read FGSL…TLAM, WLIR…LHVG, TWTI…LGYV, and FFAL…MHLI. Heme b-binding residues include His82 and His96. Heme b-binding residues include His183 and His197. His202 lines the a ubiquinone pocket. 4 consecutive transmembrane segments (helical) span residues 226–246, 290–310, 322–342, and 349–369; these read FIFK…IFIF, LLGV…PITD, LSKI…QLGA, and FIEF…IIVP.

The protein belongs to the cytochrome b family. In terms of assembly, fungal cytochrome b-c1 complex contains 10 subunits; 3 respiratory subunits, 2 core proteins and 5 low-molecular weight proteins. Cytochrome b-c1 complex is a homodimer. Heme b is required as a cofactor.

The protein resides in the mitochondrion inner membrane. Component of the ubiquinol-cytochrome c reductase complex (complex III or cytochrome b-c1 complex) that is part of the mitochondrial respiratory chain. The b-c1 complex mediates electron transfer from ubiquinol to cytochrome c. Contributes to the generation of a proton gradient across the mitochondrial membrane that is then used for ATP synthesis. The protein is Cytochrome b (cob) of Zymoseptoria tritici (Speckled leaf blotch fungus).